We begin with the raw amino-acid sequence, 399 residues long: Nuclear hormone receptor family member nhr-125 (399 aa).

The nuclear receptor DNA-binding region spans 10–80; that stretch reads PFSCRICNQK…MGMDTTKFQY (71 aa). NR C4-type zinc fingers lie at residues 13-33 and 50-63; these read CRIC…CRAC and CQKG…CKRC. Residues 149–392 enclose the NR LBD domain; that stretch reads QLENLTEGFK…EKLQKSQFSI (244 aa).

The protein belongs to the nuclear hormone receptor family.

It localises to the nucleus. Functionally, orphan nuclear receptor. The chain is Nuclear hormone receptor family member nhr-125 (nhr-125) from Caenorhabditis elegans.